The chain runs to 397 residues: Plasma membrane iron permease (397 aa).

4 consecutive transmembrane segments (helical) span residues 61–81 (FTAL…FYAL), 92–112 (IWEG…GFAM), 177–197 (AFPL…YFIY), and 292–312 (GSIL…FLMW). Phosphoserine is present on residues S337 and S338. Residues 337–346 (SSHTPVQSSS) are compositionally biased toward polar residues. Residues 337–364 (SSHTPVQSSSSEDEFKINSPTDDKGDKA) are disordered. The residue at position 340 (T340) is a Phosphothreonine. S346, S347, and S355 each carry phosphoserine. A compositionally biased stretch (basic and acidic residues) spans 349–364 (DEFKINSPTDDKGDKA). At T357 the chain carries Phosphothreonine. Phosphoserine is present on residues S374, S375, and S376.

This sequence belongs to the oxidase-dependent Fe transporter (OFeT) (TC 9.A.10.1) family.

The protein resides in the membrane. Permease for high affinity iron uptake. The polypeptide is Plasma membrane iron permease (fip1) (Schizosaccharomyces pombe (strain 972 / ATCC 24843) (Fission yeast)).